The following is a 363-amino-acid chain: 3-dehydroquinate synthase (363 aa).

NAD(+)-binding positions include 134 to 135 (TT), lysine 147, and lysine 156. Glutamate 189, histidine 254, and histidine 271 together coordinate Zn(2+).

Belongs to the sugar phosphate cyclases superfamily. Dehydroquinate synthase family. Co(2+) is required as a cofactor. It depends on Zn(2+) as a cofactor. The cofactor is NAD(+).

It localises to the cytoplasm. It carries out the reaction 7-phospho-2-dehydro-3-deoxy-D-arabino-heptonate = 3-dehydroquinate + phosphate. It participates in metabolic intermediate biosynthesis; chorismate biosynthesis; chorismate from D-erythrose 4-phosphate and phosphoenolpyruvate: step 2/7. Its function is as follows. Catalyzes the conversion of 3-deoxy-D-arabino-heptulosonate 7-phosphate (DAHP) to dehydroquinate (DHQ). In Prochlorococcus marinus (strain MIT 9312), this protein is 3-dehydroquinate synthase.